The sequence spans 124 residues: uncharacterized protein (124 aa).

Residues 82 to 124 form a disordered region; sequence SDLGIEGGERAQGQNAHSVHGPGLQTERGGSQLQMVGHPLREL.

This is an uncharacterized protein from Human cytomegalovirus (strain AD169) (HHV-5).